Consider the following 503-residue polypeptide: MKKALLMILDGYGISSTTHGNAVKNAKTPHLDNLMNNNPTIMLQASGEAVGLPKNQIGNSEVGHLNIGAGRIIYTGLSLINKEIENKKFFTNQALLNAIDHAKKNNSKLHILGLVSNGGVHSHINHIYAIMELANQHNVPAILHIFGDGRDVPPTQLLADLDQLIKKAETTKTKIGTISGRFYAMDRDQRWDRIDLAYNNLLSNTGKSFADLKTYVKDSYQQNITDEFIVPAYNNNYKSDEITIQDNDSVVFANFRPDRARQLSHYVFGSNYYDHHPQLRRKNLYFVIMMQYEGINPSAICYPPKIEKNTLGEVLKNANKKQLRIAETEKYAHVTFFFDGGVEVEYQNEDKVLVPSRKDVKTYDLAPEMSAAAIVDQLLKVYTKYDLTVLNFANPDMVGHTGNYEATLKGLEALDHEIGRLLADAKKNNITVFFTADHGNAEEMIDENNQKVTKHTTNVVPFSITDPNVKFTKKEGILANVAPTILKYLEIQIPEEMDQEPLI.

Residues Asp-10 and Ser-60 each contribute to the Mn(2+) site. The active-site Phosphoserine intermediate is Ser-60. Substrate contacts are provided by residues His-121, 150–151 (RD), Arg-181, Arg-187, 256–259 (RPDR), and Lys-330. Mn(2+) contacts are provided by Asp-396, His-400, Asp-437, His-438, and His-455.

The protein belongs to the BPG-independent phosphoglycerate mutase family. In terms of assembly, monomer. The cofactor is Mn(2+).

It carries out the reaction (2R)-2-phosphoglycerate = (2R)-3-phosphoglycerate. Its pathway is carbohydrate degradation; glycolysis; pyruvate from D-glyceraldehyde 3-phosphate: step 3/5. In terms of biological role, catalyzes the interconversion of 2-phosphoglycerate and 3-phosphoglycerate. The protein is 2,3-bisphosphoglycerate-independent phosphoglycerate mutase of Mycoplasmoides gallisepticum (strain R(low / passage 15 / clone 2)) (Mycoplasma gallisepticum).